The chain runs to 21 residues: Cupiennin-6e (21 aa).

Serine 21 carries the post-translational modification Serine amide.

In terms of tissue distribution, expressed by the venom gland.

The protein localises to the secreted. The protein is Cupiennin-6e of Cupiennius salei (American wandering spider).